The following is a 708-amino-acid chain: ATP-dependent DNA helicase Hel308 (708 aa).

ATP is bound by residues Q28 and 46–53 (TATASGKS). The Helicase ATP-binding domain occupies 33–198 (RAGIFDGRSV…WLGARLVESS (166 aa)). The short motif at 143–146 (DEIH) is the DEAH box element. Positions 231-429 (EVALAVDAVA…EPNLRAHVLG (199 aa)) constitute a Helicase C-terminal domain.

The protein belongs to the helicase family. Hel308 subfamily. Monomer.

The catalysed reaction is Couples ATP hydrolysis with the unwinding of duplex DNA by translocating in the 3'-5' direction.. It catalyses the reaction ATP + H2O = ADP + phosphate + H(+). In terms of biological role, DNA-dependent ATPase and 3'-5' DNA helicase that may be involved in repair of stalled replication forks. This chain is ATP-dependent DNA helicase Hel308, found in Pyrobaculum calidifontis (strain DSM 21063 / JCM 11548 / VA1).